The chain runs to 295 residues: Phosphatidylserine decarboxylase proenzyme (295 aa).

Active-site charge relay system; for autoendoproteolytic cleavage activity residues include aspartate 113, histidine 169, and serine 256. Serine 256 functions as the Schiff-base intermediate with substrate; via pyruvic acid; for decarboxylase activity in the catalytic mechanism. Position 256 is a pyruvic acid (Ser); by autocatalysis (serine 256).

This sequence belongs to the phosphatidylserine decarboxylase family. PSD-B subfamily. Prokaryotic type II sub-subfamily. Heterodimer of a large membrane-associated beta subunit and a small pyruvoyl-containing alpha subunit. The cofactor is pyruvate. Post-translationally, is synthesized initially as an inactive proenzyme. Formation of the active enzyme involves a self-maturation process in which the active site pyruvoyl group is generated from an internal serine residue via an autocatalytic post-translational modification. Two non-identical subunits are generated from the proenzyme in this reaction, and the pyruvate is formed at the N-terminus of the alpha chain, which is derived from the carboxyl end of the proenzyme. The autoendoproteolytic cleavage occurs by a canonical serine protease mechanism, in which the side chain hydroxyl group of the serine supplies its oxygen atom to form the C-terminus of the beta chain, while the remainder of the serine residue undergoes an oxidative deamination to produce ammonia and the pyruvoyl prosthetic group on the alpha chain. During this reaction, the Ser that is part of the protease active site of the proenzyme becomes the pyruvoyl prosthetic group, which constitutes an essential element of the active site of the mature decarboxylase.

The protein resides in the cell membrane. The enzyme catalyses a 1,2-diacyl-sn-glycero-3-phospho-L-serine + H(+) = a 1,2-diacyl-sn-glycero-3-phosphoethanolamine + CO2. Its pathway is phospholipid metabolism; phosphatidylethanolamine biosynthesis; phosphatidylethanolamine from CDP-diacylglycerol: step 2/2. Its function is as follows. Catalyzes the formation of phosphatidylethanolamine (PtdEtn) from phosphatidylserine (PtdSer). In Clostridium botulinum (strain Kyoto / Type A2), this protein is Phosphatidylserine decarboxylase proenzyme.